Reading from the N-terminus, the 476-residue chain is Nuclear envelope morphology protein 1 (476 aa).

Positions arginine 47–glutamate 74 are disordered. The span at serine 51–serine 62 shows a compositional bias: low complexity. Over residues proline 64–glutamate 74 the composition is skewed to basic and acidic residues. A helical transmembrane segment spans residues phenylalanine 123–tyrosine 139. Disordered regions lie at residues serine 164–asparagine 190 and glycine 232–aspartate 256. Over residues alanine 234 to aspartate 256 the composition is skewed to polar residues. Residues asparagine 237, asparagine 257, asparagine 284, and asparagine 356 are each glycosylated (N-linked (GlcNAc...) asparagine). Residues serine 299–leucine 460 enclose the FCP1 homology domain.

It belongs to the Dullard family. As to quaternary structure, component of the nem1-spo7 complex.

The protein localises to the endoplasmic reticulum membrane. It is found in the nucleus membrane. It catalyses the reaction O-phospho-L-seryl-[protein] + H2O = L-seryl-[protein] + phosphate. The catalysed reaction is O-phospho-L-threonyl-[protein] + H2O = L-threonyl-[protein] + phosphate. In terms of biological role, catalytic component of the nem1-spo7 complex which acts as a phosphatase and may be required for proper nuclear membrane morphology. This Schizosaccharomyces pombe (strain 972 / ATCC 24843) (Fission yeast) protein is Nuclear envelope morphology protein 1 (nem1).